The following is a 291-amino-acid chain: uncharacterized protein (291 aa).

The protein belongs to the pseudouridine synthase RluA family.

It catalyses the reaction a uridine in RNA = a pseudouridine in RNA. This is an uncharacterized protein from Synechocystis sp. (strain ATCC 27184 / PCC 6803 / Kazusa).